Consider the following 637-residue polypeptide: Serine/threonine protein kinase ypkA (637 aa).

Positions 20 to 29 are enriched in low complexity; sequence TFTRSSSTST. Disordered stretches follow at residues 20-63 and 104-140; these read TFTR…SLVS and SSSV…INAA. Residues 40–61 show a composition bias toward polar residues; it reads VVSQTPSISSTNSNGINASESL. Positions 104–116 are enriched in low complexity; that stretch reads SSSVRPSSSSSHS. Over residues 117–136 the composition is skewed to polar residues; that stretch reads THGQTASFAQSGRPQSTSGG. Residues 294–551 enclose the Protein kinase domain; the sequence is FDLLKVVGKG…AAEIKSHHFF (258 aa). ATP contacts are provided by residues 300-308 and Lys323; that span reads VGKGSFGKV. The active-site Proton acceptor is the Asp417. In terms of domain architecture, AGC-kinase C-terminal spans 552–623; sequence ANIDWRKLLQ…NRPVAGLGDA (72 aa). Phosphoserine is present on residues Ser593 and Ser612. Tyr613 carries the post-translational modification Phosphotyrosine.

This sequence belongs to the protein kinase superfamily. Ser/Thr protein kinase family. As to quaternary structure, interacts with the sakA MAP kinase.

It catalyses the reaction L-seryl-[protein] + ATP = O-phospho-L-seryl-[protein] + ADP + H(+). The catalysed reaction is L-threonyl-[protein] + ATP = O-phospho-L-threonyl-[protein] + ADP + H(+). Its function is as follows. Serine/threonine protein kinase required for vegetative growth and conidiation. Important for fungal survival through the regulation of glycosphingolipid (GSL) biosynthesis and cross talks with MAP kinase pathways such as the cell wall integrity (CWI) and the high osmolarity glycerol (HOG) pathways. In Aspergillus fumigatus (strain ATCC MYA-4609 / CBS 101355 / FGSC A1100 / Af293) (Neosartorya fumigata), this protein is Serine/threonine protein kinase ypkA.